The following is a 553-amino-acid chain: CTP synthase (553 aa).

Positions 1 to 278 (MVRRTHGNSQ…DAYVVRELGL (278 aa)) are amidoligase domain. Ser-25 is a binding site for CTP. Ser-25 contacts UTP. ATP is bound by residues 26–31 (SLGKGL) and Asp-83. Positions 83 and 152 each coordinate Mg(2+). CTP is bound by residues 159–161 (DIE), 199–204 (KTKPTQ), and Lys-235. UTP contacts are provided by residues 199-204 (KTKPTQ) and Lys-235. Residues 303-552 (NIAIVGKYID…VKAALDHQAA (250 aa)) enclose the Glutamine amidotransferase type-1 domain. Gly-366 contacts L-glutamine. Cys-393 functions as the Nucleophile; for glutamine hydrolysis in the catalytic mechanism. Residues 394–397 (LGLQ), Glu-417, and Arg-478 each bind L-glutamine. Residues His-525 and Glu-527 contribute to the active site.

This sequence belongs to the CTP synthase family. Homotetramer.

The enzyme catalyses UTP + L-glutamine + ATP + H2O = CTP + L-glutamate + ADP + phosphate + 2 H(+). The catalysed reaction is L-glutamine + H2O = L-glutamate + NH4(+). It carries out the reaction UTP + NH4(+) + ATP = CTP + ADP + phosphate + 2 H(+). Its pathway is pyrimidine metabolism; CTP biosynthesis via de novo pathway; CTP from UDP: step 2/2. Its activity is regulated as follows. Allosterically activated by GTP, when glutamine is the substrate; GTP has no effect on the reaction when ammonia is the substrate. The allosteric effector GTP functions by stabilizing the protein conformation that binds the tetrahedral intermediate(s) formed during glutamine hydrolysis. Inhibited by the product CTP, via allosteric rather than competitive inhibition. Catalyzes the ATP-dependent amination of UTP to CTP with either L-glutamine or ammonia as the source of nitrogen. Regulates intracellular CTP levels through interactions with the four ribonucleotide triphosphates. This is CTP synthase from Bifidobacterium longum (strain NCC 2705).